The sequence spans 238 residues: Ribonuclease 3 (238 aa).

Residues 10 to 139 (FKQFQEQTGI…FIGALYLDQG (130 aa)) form the RNase III domain. Glu52 contributes to the Mg(2+) binding site. The active site involves Asp56. Mg(2+)-binding residues include Asp125 and Glu128. Residue Glu128 is part of the active site. The DRBM domain maps to 165–234 (DYKSQLQEFV…AQMALAKLKQ (70 aa)).

This sequence belongs to the ribonuclease III family. In terms of assembly, homodimer. Mg(2+) is required as a cofactor.

The protein resides in the cytoplasm. The catalysed reaction is Endonucleolytic cleavage to 5'-phosphomonoester.. Digests double-stranded RNA. Involved in the processing of primary rRNA transcript to yield the immediate precursors to the large and small rRNAs (23S and 16S). Processes some mRNAs, and tRNAs when they are encoded in the rRNA operon. Processes pre-crRNA and tracrRNA of type II CRISPR loci if present in the organism. The chain is Ribonuclease 3 from Anoxybacillus flavithermus (strain DSM 21510 / WK1).